A 53-amino-acid polypeptide reads, in one-letter code: uncharacterized protein (53 aa).

Belongs to the ycf15 family.

Its subcellular location is the plastid. The protein resides in the chloroplast. This is an uncharacterized protein from Helianthus annuus (Common sunflower).